A 343-amino-acid polypeptide reads, in one-letter code: Fructose-1,6-bisphosphatase class 1 (343 aa).

The Mg(2+) site is built by Glu91, Asp113, Ile115, and Asp116. Residues 116 to 119 (DGSS), Asn210, and Lys276 contribute to the substrate site. Glu282 is a binding site for Mg(2+).

This sequence belongs to the FBPase class 1 family. Homotetramer. Requires Mg(2+) as cofactor.

Its subcellular location is the cytoplasm. It catalyses the reaction beta-D-fructose 1,6-bisphosphate + H2O = beta-D-fructose 6-phosphate + phosphate. The protein operates within carbohydrate biosynthesis; gluconeogenesis. The chain is Fructose-1,6-bisphosphatase class 1 from Parvibaculum lavamentivorans (strain DS-1 / DSM 13023 / NCIMB 13966).